A 464-amino-acid polypeptide reads, in one-letter code: tRNA modification GTPase MnmE (464 aa).

(6S)-5-formyl-5,6,7,8-tetrahydrofolate-binding residues include Arg27, Glu90, and Lys129. The TrmE-type G domain maps to 222–384 (GIALVLAGSV…LYDKIRSLTC (163 aa)). Residues 232-237 (NVGKSS), 251-257 (SSYAGTT), and 276-279 (DTAG) contribute to the GTP site. Mg(2+)-binding residues include Ser236 and Thr257. Lys464 contacts (6S)-5-formyl-5,6,7,8-tetrahydrofolate.

It belongs to the TRAFAC class TrmE-Era-EngA-EngB-Septin-like GTPase superfamily. TrmE GTPase family. As to quaternary structure, homodimer. Heterotetramer of two MnmE and two MnmG subunits. The cofactor is K(+).

The protein localises to the cytoplasm. In terms of biological role, exhibits a very high intrinsic GTPase hydrolysis rate. Involved in the addition of a carboxymethylaminomethyl (cmnm) group at the wobble position (U34) of certain tRNAs, forming tRNA-cmnm(5)s(2)U34. The polypeptide is tRNA modification GTPase MnmE (Borrelia turicatae (strain 91E135)).